Reading from the N-terminus, the 942-residue chain is Isoleucine--tRNA ligase (942 aa).

The 'HIGH' region motif lies at 58-68; that stretch reads PYANGDIHIGH. Glutamate 566 contacts L-isoleucyl-5'-AMP. The 'KMSKS' region motif lies at 607–611; sequence KMSKS. Lysine 610 provides a ligand contact to ATP. Residues cysteine 905, cysteine 908, cysteine 925, and cysteine 928 each coordinate Zn(2+).

It belongs to the class-I aminoacyl-tRNA synthetase family. IleS type 1 subfamily. As to quaternary structure, monomer. Zn(2+) is required as a cofactor.

It localises to the cytoplasm. The enzyme catalyses tRNA(Ile) + L-isoleucine + ATP = L-isoleucyl-tRNA(Ile) + AMP + diphosphate. In terms of biological role, catalyzes the attachment of isoleucine to tRNA(Ile). As IleRS can inadvertently accommodate and process structurally similar amino acids such as valine, to avoid such errors it has two additional distinct tRNA(Ile)-dependent editing activities. One activity is designated as 'pretransfer' editing and involves the hydrolysis of activated Val-AMP. The other activity is designated 'posttransfer' editing and involves deacylation of mischarged Val-tRNA(Ile). In Vibrio parahaemolyticus serotype O3:K6 (strain RIMD 2210633), this protein is Isoleucine--tRNA ligase.